Reading from the N-terminus, the 238-residue chain is Oil body-associated protein 1A (238 aa).

The protein belongs to the OBAP family. As to expression, expressed in seeds, but not in leaves or roots. Highest expression in scutellum. Detected in embryo axis and endosperm.

The protein resides in the lipid droplet. In Zea mays (Maize), this protein is Oil body-associated protein 1A.